We begin with the raw amino-acid sequence, 202 residues long: MKPWILGLTGGIGSGKSAVVEQFGRLGVHWVDADHAARWVVEPGKPALARIAEHFGDGVLTPAGELDRAVLRARVFENAGERRWLEQLLHPLIRQEIAEHLSRAQSPYAILVSPLLIEAGQYRQADRVLVVDVPESLQLQRAMRRDQASEAQIRAILKAQASREERLRHADDVLVNDRDRAWLEAEVARLHDFYLTLRGGQP.

In terms of domain architecture, DPCK spans 5–202 (ILGLTGGIGS…FYLTLRGGQP (198 aa)). An ATP-binding site is contributed by 13-18 (GSGKSA).

Belongs to the CoaE family.

It is found in the cytoplasm. The enzyme catalyses 3'-dephospho-CoA + ATP = ADP + CoA + H(+). It participates in cofactor biosynthesis; coenzyme A biosynthesis; CoA from (R)-pantothenate: step 5/5. Functionally, catalyzes the phosphorylation of the 3'-hydroxyl group of dephosphocoenzyme A to form coenzyme A. This Stutzerimonas stutzeri (Pseudomonas stutzeri) protein is Dephospho-CoA kinase.